Consider the following 63-residue polypeptide: Beta-defensin 38 (63 aa).

Positions 1–21 (MKISCFLLLVLSLYLFQVNQA) are cleaved as a signal peptide. Cystine bridges form between cysteine 29/cysteine 58, cysteine 36/cysteine 51, and cysteine 41/cysteine 59.

Belongs to the beta-defensin family.

It is found in the secreted. In terms of biological role, has antibacterial activity. The protein is Beta-defensin 38 (Defb38) of Rattus norvegicus (Rat).